A 227-amino-acid chain; its full sequence is Cytochrome c oxidase subunit 2 (227 aa).

Residues 1 to 14 lie on the Mitochondrial intermembrane side of the membrane; the sequence is MAYPLQMGLQDATS. The chain crosses the membrane as a helical span at residues 15–45; it reads PIMEELLHFHDHTLMIVFLISSLVLYIISLM. Topologically, residues 46-59 are mitochondrial matrix; it reads LTTKLTHTSTMDAQ. The chain crosses the membrane as a helical span at residues 60–87; it reads EVETVWTILPAIILILIALPSLRILYMM. The Mitochondrial intermembrane segment spans residues 88 to 227; the sequence is DEINNPSLTV…HFEKWSTSML (140 aa). Residues His161, Cys196, Glu198, Cys200, His204, and Met207 each contribute to the Cu cation site. Residue Glu198 coordinates Mg(2+).

It belongs to the cytochrome c oxidase subunit 2 family. In terms of assembly, component of the cytochrome c oxidase (complex IV, CIV), a multisubunit enzyme composed of 14 subunits. The complex is composed of a catalytic core of 3 subunits MT-CO1, MT-CO2 and MT-CO3, encoded in the mitochondrial DNA, and 11 supernumerary subunits COX4I, COX5A, COX5B, COX6A, COX6B, COX6C, COX7A, COX7B, COX7C, COX8 and NDUFA4, which are encoded in the nuclear genome. The complex exists as a monomer or a dimer and forms supercomplexes (SCs) in the inner mitochondrial membrane with NADH-ubiquinone oxidoreductase (complex I, CI) and ubiquinol-cytochrome c oxidoreductase (cytochrome b-c1 complex, complex III, CIII), resulting in different assemblies (supercomplex SCI(1)III(2)IV(1) and megacomplex MCI(2)III(2)IV(2)). Found in a complex with TMEM177, COA6, COX18, COX20, SCO1 and SCO2. Interacts with TMEM177 in a COX20-dependent manner. Interacts with COX20. Interacts with COX16. Requires Cu cation as cofactor.

The protein resides in the mitochondrion inner membrane. It carries out the reaction 4 Fe(II)-[cytochrome c] + O2 + 8 H(+)(in) = 4 Fe(III)-[cytochrome c] + 2 H2O + 4 H(+)(out). Its function is as follows. Component of the cytochrome c oxidase, the last enzyme in the mitochondrial electron transport chain which drives oxidative phosphorylation. The respiratory chain contains 3 multisubunit complexes succinate dehydrogenase (complex II, CII), ubiquinol-cytochrome c oxidoreductase (cytochrome b-c1 complex, complex III, CIII) and cytochrome c oxidase (complex IV, CIV), that cooperate to transfer electrons derived from NADH and succinate to molecular oxygen, creating an electrochemical gradient over the inner membrane that drives transmembrane transport and the ATP synthase. Cytochrome c oxidase is the component of the respiratory chain that catalyzes the reduction of oxygen to water. Electrons originating from reduced cytochrome c in the intermembrane space (IMS) are transferred via the dinuclear copper A center (CU(A)) of subunit 2 and heme A of subunit 1 to the active site in subunit 1, a binuclear center (BNC) formed by heme A3 and copper B (CU(B)). The BNC reduces molecular oxygen to 2 water molecules using 4 electrons from cytochrome c in the IMS and 4 protons from the mitochondrial matrix. In Phoca vitulina (Harbor seal), this protein is Cytochrome c oxidase subunit 2 (MT-CO2).